The primary structure comprises 432 residues: DNA damage-binding protein 2 (432 aa).

The disordered stretch occupies residues 1–31 (MAPKKCPETQKSPDVAVLLRSKSRRGPQELE). N6-acetyllysine occurs at positions 35 and 77. Required for interaction with DDB1 stretches follow at residues 68-79 (SIVRDLYQHKLG) and 87-98 (QQGLQKSFLHSL). WD repeat units lie at residues 116-151 (SLAW…IFLK), 159-194 (ITGL…LRVY), 203-238 (WFCS…LWNL), 244-287 (KVAH…SLPH), and 290-329 (PVNA…LISH). Residues 256–274 (WLLATASIDQTVKIWDLRQ) carry the DWD box motif. Residues 334-336 (FQH) form a photolesion recognition region. WD repeat units lie at residues 343 to 386 (TWHS…MCQL) and 396 to 420 (SLNE…IWSQ).

The protein belongs to the WD repeat DDB2/WDR76 family. Component of the UV-DDB complex which includes DDB1 and DDB2. The UV-DDB complex interacts with monoubiquitinated histone H2A and binds to XPC via the DDB2 subunit. Component of the DCX (DDB1-CUL4-X-box) E3 ubiquitin-protein ligase complex DDB1-CUL4-ROC1 (also known as CUL4-DDB-ROC1 and CUL4-DDB-RBX1), which includes CUL4A or CUL4B, DDB1, DDB2 and RBX1. DDB2 may function as the substrate recognition module within this complex. The DDB1-CUL4-ROC1 complex may associate with the COP9 signalosome, and this inhibits the E3 ubiquitin-protein ligase activity of the complex. A large number of other DCX complexes may also exist in which an alternate substrate targeting subunit replaces DDB2. These targeting subunits are generally known as DCAF (DDB1- and CUL4-associated factor) or CDW (CUL4-DDB1-associated WD40-repeat) proteins. In terms of processing, phosphorylation by ABL1 negatively regulate UV-DDB activity. Post-translationally, ubiquitinated by CUL4A in response to UV irradiation. Ubiquitination appears to both impair DNA-binding and promotes ubiquitin-dependent proteolysis. Degradation of DDB2 at sites of DNA damage may be a prerequisite for their recognition by XPC and subsequent repair. CUL4A-mediated degradation appears to be promoted by ABL1. Ubiquitinated, leading to proteasomal degradation, and deubiquitinated by USP24. Deubiquitinated by USP44; leading to its stabilization on DNA lesions. In terms of processing, acetylated. Deacetylation by SIRT6 in response to UV stress facilitates nucleotide excision repair pathway (the NER pathway) transduction. As to expression, expressed in bone marrow, liver, lung, muscle, pancreas and spleen.

The protein localises to the nucleus. It is found in the chromosome. It participates in protein modification; protein ubiquitination. Functionally, protein, which is both involved in DNA repair and protein ubiquitination, as part of the UV-DDB complex and DCX (DDB1-CUL4-X-box) complexes, respectively. Core component of the UV-DDB complex (UV-damaged DNA-binding protein complex), a complex that recognizes UV-induced DNA damage and recruit proteins of the nucleotide excision repair pathway (the NER pathway) to initiate DNA repair. The UV-DDB complex preferentially binds to cyclobutane pyrimidine dimers (CPD), 6-4 photoproducts (6-4 PP), apurinic sites and short mismatches. Also functions as the substrate recognition module for the DCX (DDB2-CUL4-X-box) E3 ubiquitin-protein ligase complex DDB2-CUL4-ROC1 (also known as CUL4-DDB-ROC1 and CUL4-DDB-RBX1). The DDB2-CUL4-ROC1 complex may ubiquitinate histone H2A, histone H3 and histone H4 at sites of UV-induced DNA damage. The ubiquitination of histones may facilitate their removal from the nucleosome and promote subsequent DNA repair. The DDB2-CUL4-ROC1 complex also ubiquitinates XPC, which may enhance DNA-binding by XPC and promote NER. The DDB2-CUL4-ROC1 complex also ubiquitinates KAT7/HBO1 in response to DNA damage, leading to its degradation: recognizes KAT7/HBO1 following phosphorylation by ATR. In Mus musculus (Mouse), this protein is DNA damage-binding protein 2 (Ddb2).